The chain runs to 422 residues: Hexuronate transporter (422 aa).

A run of 11 helical transmembrane segments spans residues 9-29 (VILFLFLAGVINYLDRSALSI), 45-65 (MGLIFSSFSIGYAIFNFLGGV), 82-102 (VWSLFSGAVALAFGFVSLLII), 141-161 (TPLGGAISGPIVGMIAVAFSW), 163-183 (VSFVLIMIIGLIWAVLWFKFV), 219-239 (LFTAFAFFAYNYILFFFLTWF), 256-276 (VITVIPWILGFIGLAAGGFVS), 294-314 (VVLVTCLFSSAVLIGFAGLVA), 321-341 (TLVALSVFFLYLTGAIYWAVI), 356-376 (FMHFLANTAGIIGPALTGFIV), and 381-401 (TFSGAFLLAGGLAVFASLAVI).

Belongs to the major facilitator superfamily. Phthalate permease family.

Its subcellular location is the cell membrane. It carries out the reaction aldehydo-D-glucuronate(in) + H(+)(in) = aldehydo-D-glucuronate(out) + H(+)(out). The enzyme catalyses aldehydo-D-galacturonate(out) + H(+)(out) = aldehydo-D-galacturonate(in) + H(+)(in). Transport of aldohexuronates such as D-glucuronate and D-galacturonate. The protein is Hexuronate transporter of Bacillus subtilis (strain 168).